We begin with the raw amino-acid sequence, 757 residues long: Polyribonucleotide nucleotidyltransferase (757 aa).

Residues Asp532 and Asp538 each contribute to the Mg(2+) site. In terms of domain architecture, KH spans 598 to 657; the sequence is PRVTAIKVPVDKIGEVIGPKGKMINSITEQTGANISIEDDGTVFVGATDGPSAQAAIDMI. The S1 motif domain occupies 669–738; the sequence is GERFLGTVVK…NRGKISLIPV (70 aa).

It belongs to the polyribonucleotide nucleotidyltransferase family. Mg(2+) serves as cofactor.

The protein resides in the cytoplasm. It catalyses the reaction RNA(n+1) + phosphate = RNA(n) + a ribonucleoside 5'-diphosphate. Involved in mRNA degradation. Catalyzes the phosphorolysis of single-stranded polyribonucleotides processively in the 3'- to 5'-direction. The polypeptide is Polyribonucleotide nucleotidyltransferase (Rhodococcus jostii (strain RHA1)).